Reading from the N-terminus, the 159-residue chain is 2-C-methyl-D-erythritol 2,4-cyclodiphosphate synthase (159 aa).

A divalent metal cation-binding residues include Asp-8 and His-10. Residues 8 to 10 (DVH) and 34 to 35 (HS) contribute to the 4-CDP-2-C-methyl-D-erythritol 2-phosphate site. His-42 provides a ligand contact to a divalent metal cation. 4-CDP-2-C-methyl-D-erythritol 2-phosphate is bound by residues 56–58 (DIG), 132–135 (TTTE), and Arg-142.

The protein belongs to the IspF family. As to quaternary structure, homotrimer. A divalent metal cation serves as cofactor.

The catalysed reaction is 4-CDP-2-C-methyl-D-erythritol 2-phosphate = 2-C-methyl-D-erythritol 2,4-cyclic diphosphate + CMP. It participates in isoprenoid biosynthesis; isopentenyl diphosphate biosynthesis via DXP pathway; isopentenyl diphosphate from 1-deoxy-D-xylulose 5-phosphate: step 4/6. Its function is as follows. Involved in the biosynthesis of isopentenyl diphosphate (IPP) and dimethylallyl diphosphate (DMAPP), two major building blocks of isoprenoid compounds. Catalyzes the conversion of 4-diphosphocytidyl-2-C-methyl-D-erythritol 2-phosphate (CDP-ME2P) to 2-C-methyl-D-erythritol 2,4-cyclodiphosphate (ME-CPP) with a corresponding release of cytidine 5-monophosphate (CMP). The protein is 2-C-methyl-D-erythritol 2,4-cyclodiphosphate synthase of Chlorobium phaeobacteroides (strain BS1).